A 540-amino-acid chain; its full sequence is Probable LRR receptor-like serine/threonine-protein kinase RPK1 (540 aa).

The signal sequence occupies residues 1 to 19 (MKLLGLVFLLFNLFMFSFS). Over 20–198 (RKLLTESGGG…PGKSGLYPIE (179 aa)) the chain is Extracellular. LRR repeat units follow at residues 118–142 (LSEI…IWGL) and 144–169 (KLEI…VLRK). A helical membrane pass occupies residues 199 to 219 (IASIVSASVIVFVLLVLVILF). Residues 220–540 (IYTRKWKRNS…LLKRIQPSRL (321 aa)) lie on the Cytoplasmic side of the membrane. Residues threonine 250 and threonine 258 each carry the phosphothreonine modification. Residues 261-535 (FSNSNCIGHG…KQAVRLLKRI (275 aa)) form the Protein kinase domain. ATP is bound by residues 267 to 275 (IGHGGFGST) and lysine 289. Phosphotyrosine is present on residues tyrosine 334 and tyrosine 372. Aspartate 385 serves as the catalytic Proton acceptor. Phosphotyrosine is present on tyrosine 427. Phosphothreonine is present on threonine 435.

Belongs to the protein kinase superfamily. Ser/Thr protein kinase family. Expressed in roots, stems, leaves, and flowers.

It localises to the cell membrane. It carries out the reaction L-seryl-[protein] + ATP = O-phospho-L-seryl-[protein] + ADP + H(+). The catalysed reaction is L-threonyl-[protein] + ATP = O-phospho-L-threonyl-[protein] + ADP + H(+). Involved in the main abscisic acid-mediated (ABA) signaling pathway and in early ABA perception. Together with RPK2, required for pattern formation along the radial axis (e.g. the apical embryonic domain cell types that generate cotyledon primordia), and the apical-basal axis (e.g. differentiation of the basal pole during early embryogenesis). This Arabidopsis thaliana (Mouse-ear cress) protein is Probable LRR receptor-like serine/threonine-protein kinase RPK1 (RPK1).